Here is a 490-residue protein sequence, read N- to C-terminus: Chromosomal replication initiator protein DnaA (490 aa).

The tract at residues 1-75 (MAVSSDAEQK…SELWKQEDAD (75 aa)) is domain I, interacts with DnaA modulators. Residues 75 to 145 (DLLKIEIVVR…SEFRHNVLGS (71 aa)) form a domain II region. Positions 146–368 (PLDPRYTFGS…GAFNQLLFRQ (223 aa)) are domain III, AAA+ region. Glycine 192, glycine 194, lysine 195, and threonine 196 together coordinate ATP. The segment at 369 to 490 (SFEPQITIDR…LLRRLINDQA (122 aa)) is domain IV, binds dsDNA.

It belongs to the DnaA family. Oligomerizes as a right-handed, spiral filament on DNA at oriC.

It is found in the cytoplasm. In terms of biological role, plays an essential role in the initiation and regulation of chromosomal replication. ATP-DnaA binds to the origin of replication (oriC) to initiate formation of the DNA replication initiation complex once per cell cycle. Binds the DnaA box (a 9 base pair repeat at the origin) and separates the double-stranded (ds)DNA. Forms a right-handed helical filament on oriC DNA; dsDNA binds to the exterior of the filament while single-stranded (ss)DNA is stabiized in the filament's interior. The ATP-DnaA-oriC complex binds and stabilizes one strand of the AT-rich DNA unwinding element (DUE), permitting loading of DNA polymerase. After initiation quickly degrades to an ADP-DnaA complex that is not apt for DNA replication. Binds acidic phospholipids. The protein is Chromosomal replication initiator protein DnaA of Mesorhizobium japonicum (strain LMG 29417 / CECT 9101 / MAFF 303099) (Mesorhizobium loti (strain MAFF 303099)).